A 177-amino-acid polypeptide reads, in one-letter code: Peptide methionine sulfoxide reductase MsrA (177 aa).

The active site involves Cys-15.

This sequence belongs to the MsrA Met sulfoxide reductase family.

The catalysed reaction is L-methionyl-[protein] + [thioredoxin]-disulfide + H2O = L-methionyl-(S)-S-oxide-[protein] + [thioredoxin]-dithiol. It catalyses the reaction [thioredoxin]-disulfide + L-methionine + H2O = L-methionine (S)-S-oxide + [thioredoxin]-dithiol. Has an important function as a repair enzyme for proteins that have been inactivated by oxidation. Catalyzes the reversible oxidation-reduction of methionine sulfoxide in proteins to methionine. This is Peptide methionine sulfoxide reductase MsrA from Mycobacterium leprae (strain Br4923).